Here is a 483-residue protein sequence, read N- to C-terminus: Matrix metalloproteinase-20 (483 aa).

Positions 1 to 22 are cleaved as a signal peptide; that stretch reads MKVLPASGLAVLLVTALKFSAA. A propeptide spans 23–107 (activation peptide); that stretch reads APSLFAATPR…PRCGVPDVAN (85 aa). Positions 98–105 match the Cysteine switch motif; it reads PRCGVPDV. Cys100 contacts Zn(2+). Ca(2+)-binding residues include Glu164, Ala165, and Asp166. 2 residues coordinate Zn(2+): His176 and Asp178. Residues Asp183, Gly184, Arg186, and Thr188 each coordinate Ca(2+). His191 is a binding site for Zn(2+). Residues Glu197, Gly198, Gly200, and Asp202 each coordinate Ca(2+). His204 lines the Zn(2+) pocket. Residues Asp206 and Glu209 each coordinate Ca(2+). A Zn(2+)-binding site is contributed by His226. Glu227 is a catalytic residue. Zn(2+) is bound by residues His230 and His236. Hemopexin repeat units follow at residues 293–343, 344–389, 391–439, and 440–483; these read PDIC…FPQL, MSNV…GFPR, VQRI…FSGV, and NGQI…WIGC. Cys296 and Cys483 are disulfide-bonded.

This sequence belongs to the peptidase M10A family. Requires Zn(2+) as cofactor. Ca(2+) serves as cofactor. Autoactivates at least at the 107-Asn-|-Tyr-108 site. As to expression, expressed specifically in the enamel organ.

The protein resides in the secreted. Its subcellular location is the extracellular space. It localises to the extracellular matrix. Degrades amelogenin, the major protein component of the enamel matrix and two of the macromolecules characterizing the cartilage extracellular matrix: aggrecan and the cartilage oligomeric matrix protein (COMP). May play a central role in tooth enamel formation. This Sus scrofa (Pig) protein is Matrix metalloproteinase-20 (MMP20).